Here is a 115-residue protein sequence, read N- to C-terminus: MKNKFVELVEKSQLRTDLPEFNPGDSITVNLWIKEGDKQRIQAFKGFVLRKRNRGLHSAFTVRKMSSGMGVERTFQTHSPLIDSIIVEKRADVRRAKLYYMRGLTGRAARIKEKV.

The protein belongs to the bacterial ribosomal protein bL19 family.

This protein is located at the 30S-50S ribosomal subunit interface and may play a role in the structure and function of the aminoacyl-tRNA binding site. This is Large ribosomal subunit protein bL19 from Francisella tularensis subsp. tularensis (strain FSC 198).